Here is a 355-residue protein sequence, read N- to C-terminus: Green-sensitive opsin-1 (355 aa).

The Extracellular portion of the chain corresponds to Met1 to Val49. Residue Asn31 is glycosylated (N-linked (GlcNAc...) asparagine). A helical membrane pass occupies residues Tyr50–Ala74. The Cytoplasmic portion of the chain corresponds to Thr75 to Asn86. Residues Trp87–Val112 form a helical membrane-spanning segment. The Extracellular portion of the chain corresponds to Phe113–Glu126. Cys123 and Cys200 are oxidised to a cystine. Residues Gly127–Trp146 traverse the membrane as a helical segment. Residues Glu147–Trp165 are Cytoplasmic-facing. The helical transmembrane segment at Ala166–Ser189 threads the bilayer. Residues Arg190–Ser215 lie on the Extracellular side of the membrane. The chain crosses the membrane as a helical span at residues Tyr216–Ile243. The Cytoplasmic segment spans residues His244 to Arg265. Residues Met266 to Ala289 form a helical membrane-spanning segment. The Extracellular segment spans residues Leu290–His297. A helical membrane pass occupies residues Pro298 to Met322. Lys309 is modified (N6-(retinylidene)lysine). Residues Asn323 to Ser355 lie on the Cytoplasmic side of the membrane.

The protein belongs to the G-protein coupled receptor 1 family. Opsin subfamily. As to expression, the color pigments are found in the cone photoreceptor cells.

The protein resides in the membrane. In terms of biological role, visual pigments are the light-absorbing molecules that mediate vision. They consist of an apoprotein, opsin, covalently linked to cis-retinal. The polypeptide is Green-sensitive opsin-1 (G103) (Psalidodon fasciatus (Banded astyanax)).